We begin with the raw amino-acid sequence, 287 residues long: MKRIFLLIATNLAVLLVASIVMSILGVNTSTMGGLLVFAAIFGFGGAFISLAISKWMAKKTMGCEVITTPRDSTERWLVETVARQAKQAGIKMPEVAIYQSPDMNAFATGPSKDNSLVAVSTGLLYGMSQDEIEGVLAHEVSHVANGDMVTLTLIQGVVNTFVIFAARVVAGIINNFVSSNDEEGEGLGMFAYMAVVFVLDMLFGILASIIVAYFSRIREYKADEGAARLAGKGKMIAALERLRQGPESTAMPAQMSAFGINGKRSMAEMMMSHPPLEKRIAALRAS.

2 helical membrane-spanning segments follow: residues 4–24 (IFLL…VMSI) and 33–53 (GGLL…SLAI). Zn(2+) is bound at residue histidine 139. Glutamate 140 is a catalytic residue. Position 143 (histidine 143) interacts with Zn(2+). 2 helical membrane passes run 154 to 174 (LIQG…AGII) and 195 to 215 (AVVF…VAYF). Glutamate 220 provides a ligand contact to Zn(2+).

This sequence belongs to the peptidase M48B family. Requires Zn(2+) as cofactor.

The protein localises to the cell inner membrane. This chain is Protease HtpX, found in Shewanella baltica (strain OS223).